The primary structure comprises 150 residues: D-aminoacyl-tRNA deacylase (150 aa).

The Gly-cisPro motif, important for rejection of L-amino acids motif lies at 136–137; the sequence is GP.

This sequence belongs to the DTD family. As to quaternary structure, homodimer.

The protein localises to the cytoplasm. The catalysed reaction is glycyl-tRNA(Ala) + H2O = tRNA(Ala) + glycine + H(+). The enzyme catalyses a D-aminoacyl-tRNA + H2O = a tRNA + a D-alpha-amino acid + H(+). An aminoacyl-tRNA editing enzyme that deacylates mischarged D-aminoacyl-tRNAs. Also deacylates mischarged glycyl-tRNA(Ala), protecting cells against glycine mischarging by AlaRS. Acts via tRNA-based rather than protein-based catalysis; rejects L-amino acids rather than detecting D-amino acids in the active site. By recycling D-aminoacyl-tRNA to D-amino acids and free tRNA molecules, this enzyme counteracts the toxicity associated with the formation of D-aminoacyl-tRNA entities in vivo and helps enforce protein L-homochirality. This is D-aminoacyl-tRNA deacylase from Staphylococcus epidermidis (strain ATCC 35984 / DSM 28319 / BCRC 17069 / CCUG 31568 / BM 3577 / RP62A).